Reading from the N-terminus, the 177-residue chain is Large ribosomal subunit protein uL6 (177 aa).

Belongs to the universal ribosomal protein uL6 family. In terms of assembly, part of the 50S ribosomal subunit.

Its function is as follows. This protein binds to the 23S rRNA, and is important in its secondary structure. It is located near the subunit interface in the base of the L7/L12 stalk, and near the tRNA binding site of the peptidyltransferase center. In Methanocella arvoryzae (strain DSM 22066 / NBRC 105507 / MRE50), this protein is Large ribosomal subunit protein uL6.